The following is a 112-amino-acid chain: MPVQGRENMDPKSPGYLALIAQRESLDAQIIAARKAEREVAIGQIKALMKEFDLSVLDLQERVQKRNSKRMSTVPKYRDPATGKTWSGRGRQPAWLGNDPAAFLIQPDLPAI.

A disordered region spans residues 65–92; the sequence is KRNSKRMSTVPKYRDPATGKTWSGRGRQ. 2 DNA-binding regions span residues 89–94 and 89–95; these read RGRQPA and RGRQPAW.

This sequence belongs to the histone-like protein H-NS family. As to quaternary structure, homodimer that oligomerizes on DNA into higher-order complexes that form bridges between disparate regions of DNA compacting it.

Its subcellular location is the cytoplasm. The protein resides in the nucleoid. Functionally, a DNA-binding protein implicated in transcriptional repression and chromosome organization and compaction. Binds in the minor groove of AT-rich DNA. Binds nucleation sites in AT-rich DNA and bridges them, forming higher-order nucleoprotein complexes and condensing the chromosome. As many horizontally transferred genes are AT-rich, it plays a central role in silencing foreign genes. The polypeptide is DNA-binding protein Bv3F (Burkholderia vietnamiensis (strain G4 / LMG 22486) (Burkholderia cepacia (strain R1808))).